Here is a 121-residue protein sequence, read N- to C-terminus: uncharacterized protein (121 aa).

The N-terminal stretch at 1-23 (MNFSTVFQAIIAVLGLTTVTALA) is a signal peptide. 2 N-linked (GlcNAc...) asparagine glycosylation sites follow: N68 and N84.

In terms of processing, N-glycosylated.

This is an uncharacterized protein from Saccharomyces cerevisiae (strain ATCC 204508 / S288c) (Baker's yeast).